A 299-amino-acid chain; its full sequence is Ribosomal protein L11 methyltransferase (299 aa).

4 residues coordinate S-adenosyl-L-methionine: threonine 150, glycine 171, aspartate 193, and asparagine 234.

It belongs to the methyltransferase superfamily. PrmA family.

It localises to the cytoplasm. The catalysed reaction is L-lysyl-[protein] + 3 S-adenosyl-L-methionine = N(6),N(6),N(6)-trimethyl-L-lysyl-[protein] + 3 S-adenosyl-L-homocysteine + 3 H(+). Methylates ribosomal protein L11. This is Ribosomal protein L11 methyltransferase from Dictyoglomus turgidum (strain DSM 6724 / Z-1310).